Here is a 231-residue protein sequence, read N- to C-terminus: Octanoyltransferase (231 aa).

Residues 49–227 (PHLPEAVWLL…ALAARFHLAW (179 aa)) enclose the BPL/LPL catalytic domain. Substrate contacts are provided by residues 91-98 (RGGEVTHH), 158-160 (AIG), and 171-173 (GLA). C189 (acyl-thioester intermediate) is an active-site residue.

Belongs to the LipB family.

It is found in the cytoplasm. It carries out the reaction octanoyl-[ACP] + L-lysyl-[protein] = N(6)-octanoyl-L-lysyl-[protein] + holo-[ACP] + H(+). The protein operates within protein modification; protein lipoylation via endogenous pathway; protein N(6)-(lipoyl)lysine from octanoyl-[acyl-carrier-protein]: step 1/2. Its function is as follows. Catalyzes the transfer of endogenously produced octanoic acid from octanoyl-acyl-carrier-protein onto the lipoyl domains of lipoate-dependent enzymes. Lipoyl-ACP can also act as a substrate although octanoyl-ACP is likely to be the physiological substrate. The sequence is that of Octanoyltransferase from Parasynechococcus marenigrum (strain WH8102).